Consider the following 448-residue polypeptide: Probable 3-ketoacyl-CoA thiolase (448 aa).

Catalysis depends on cysteine 110, which acts as the Acyl-thioester intermediate. Catalysis depends on proton acceptor residues histidine 402 and cysteine 432.

It belongs to the thiolase-like superfamily. Thiolase family.

The protein resides in the mitochondrion. The catalysed reaction is an acyl-CoA + acetyl-CoA = a 3-oxoacyl-CoA + CoA. It functions in the pathway lipid metabolism; fatty acid beta-oxidation. Mitochondrial enzyme that catalyzes reactions of the mitochondrial beta-oxidation pathway. In Caenorhabditis elegans, this protein is Probable 3-ketoacyl-CoA thiolase.